Consider the following 819-residue polypeptide: Pentatricopeptide repeat-containing protein At1g52620 (819 aa).

PPR repeat units follow at residues 98–132 (NGFA…NVKL), 133–163 (THEA…VVEL), 169–203 (DVIA…GDSV), 204–238 (DNYS…GCIP), 239–273 (NIVF…GFMP), 274–308 (TLET…GLRV), 309–343 (SVWF…DCKP), 344–378 (DVAT…GLIP), 379–413 (NNLS…GCKP), 414–448 (DIVT…GVSP), 449–483 (DAAI…NILP), 484–518 (DAYV…GVKV), 519–553 (DVVH…HLVP), 554–588 (DKFT…KCKP), 589–623 (NVVT…DLVP), 624–659 (NVVT…KCVP), 709–743 (HAAA…GFSP), and 744–779 (DPVS…GLEV).

It belongs to the PPR family. P subfamily.

The chain is Pentatricopeptide repeat-containing protein At1g52620 from Arabidopsis thaliana (Mouse-ear cress).